The following is a 202-amino-acid chain: LexA repressor (202 aa).

A DNA-binding region (H-T-H motif) is located at residues 28 to 48 (RAEIAQRLGFRSPNAAEEHLK). Residues serine 119 and lysine 156 each act as for autocatalytic cleavage activity in the active site.

This sequence belongs to the peptidase S24 family. As to quaternary structure, homodimer.

The enzyme catalyses Hydrolysis of Ala-|-Gly bond in repressor LexA.. Its function is as follows. Represses a number of genes involved in the response to DNA damage (SOS response), including recA and lexA. Binds to the 16 bp palindromic sequence 5'-CTGTATATATATACAG-3'. In the presence of single-stranded DNA, RecA interacts with LexA causing an autocatalytic cleavage which disrupts the DNA-binding part of LexA, leading to derepression of the SOS regulon and eventually DNA repair. This is LexA repressor from Klebsiella pneumoniae subsp. pneumoniae (strain ATCC 700721 / MGH 78578).